The chain runs to 294 residues: Probable endonuclease 4 (294 aa).

The Zn(2+) site is built by histidine 78, histidine 118, glutamate 155, aspartate 189, histidine 192, histidine 226, aspartate 239, histidine 241, and glutamate 271.

This sequence belongs to the AP endonuclease 2 family. Zn(2+) serves as cofactor.

The enzyme catalyses Endonucleolytic cleavage to 5'-phosphooligonucleotide end-products.. Endonuclease IV plays a role in DNA repair. It cleaves phosphodiester bonds at apurinic or apyrimidinic (AP) sites, generating a 3'-hydroxyl group and a 5'-terminal sugar phosphate. The protein is Probable endonuclease 4 of Oleidesulfovibrio alaskensis (strain ATCC BAA-1058 / DSM 17464 / G20) (Desulfovibrio alaskensis).